A 121-amino-acid chain; its full sequence is Small ribosomal subunit protein uS13 (121 aa).

A disordered region spans residues 91-121 (HRRGLPVRGQNSKNNARTRKGPRRTVANKKK). Residues 106–121 (ARTRKGPRRTVANKKK) show a composition bias toward basic residues.

The protein belongs to the universal ribosomal protein uS13 family. Part of the 30S ribosomal subunit. Forms a loose heterodimer with protein S19. Forms two bridges to the 50S subunit in the 70S ribosome.

Located at the top of the head of the 30S subunit, it contacts several helices of the 16S rRNA. In the 70S ribosome it contacts the 23S rRNA (bridge B1a) and protein L5 of the 50S subunit (bridge B1b), connecting the 2 subunits; these bridges are implicated in subunit movement. Contacts the tRNAs in the A and P-sites. The protein is Small ribosomal subunit protein uS13 of Bacillus mycoides (strain KBAB4) (Bacillus weihenstephanensis).